The chain runs to 283 residues: 4-diphosphocytidyl-2-C-methyl-D-erythritol kinase (283 aa).

Lys-10 is an active-site residue. 95-105 (PVAAGLGGGSS) serves as a coordination point for ATP. Residue Asp-137 is part of the active site.

It belongs to the GHMP kinase family. IspE subfamily.

The enzyme catalyses 4-CDP-2-C-methyl-D-erythritol + ATP = 4-CDP-2-C-methyl-D-erythritol 2-phosphate + ADP + H(+). The protein operates within isoprenoid biosynthesis; isopentenyl diphosphate biosynthesis via DXP pathway; isopentenyl diphosphate from 1-deoxy-D-xylulose 5-phosphate: step 3/6. Its function is as follows. Catalyzes the phosphorylation of the position 2 hydroxy group of 4-diphosphocytidyl-2C-methyl-D-erythritol. The protein is 4-diphosphocytidyl-2-C-methyl-D-erythritol kinase of Limosilactobacillus fermentum (strain NBRC 3956 / LMG 18251) (Lactobacillus fermentum).